Here is a 328-residue protein sequence, read N- to C-terminus: GATA transcription factor 17 (328 aa).

Positions 1–68 (MSGHHEAKPY…EEYEGGEGVP (68 aa)) are disordered. The segment covering 14 to 29 (RGPAPADEEAAPAAAA) has biased composition (low complexity). Acidic residues-rich tracts occupy residues 30-39 (DEAEAEAEVE) and 47-63 (EQEY…EYEG). The Tify domain occupies 100–135 (PHVASNTLTLSFQGEVYVFESVSAERVQAVLLLLGG). Residues 161-203 (RMASLMRFREKRKERNFDKKIRYTVRKEVALRMQRNRGQFTSS) form the CCT domain. Residues 198–231 (GQFTSSKSKAEEATSVITSSEGSPNWGAVEGRPP) form a disordered region. A GATA-type zinc finger spans residues 236 to 263 (CHHCGISAASTPMMRRGPDGPRTLCNAC).

Belongs to the type IV zinc-finger family. Class C subfamily.

Its subcellular location is the nucleus. Its function is as follows. Transcriptional activator that specifically binds 5'-GATA-3' or 5'-GAT-3' motifs within gene promoters. The sequence is that of GATA transcription factor 17 from Oryza sativa subsp. japonica (Rice).